A 545-amino-acid polypeptide reads, in one-letter code: Ribulokinase (545 aa).

This sequence belongs to the ribulokinase family.

It carries out the reaction D-ribulose + ATP = D-ribulose 5-phosphate + ADP + H(+). The enzyme catalyses L-ribulose + ATP = L-ribulose 5-phosphate + ADP + H(+). The protein operates within carbohydrate degradation; L-arabinose degradation via L-ribulose; D-xylulose 5-phosphate from L-arabinose (bacterial route): step 2/3. This chain is Ribulokinase, found in Staphylococcus aureus (strain USA300).